A 95-amino-acid polypeptide reads, in one-letter code: Protein RnfH (95 aa).

This sequence belongs to the UPF0125 (RnfH) family.

In Erwinia tasmaniensis (strain DSM 17950 / CFBP 7177 / CIP 109463 / NCPPB 4357 / Et1/99), this protein is Protein RnfH.